A 112-amino-acid polypeptide reads, in one-letter code: Histone H2B (112 aa).

A disordered region spans residues 1-24 (MATPKSSSANRKKGGKKSHRKPKR). The segment covering 10–24 (NRKKGGKKSHRKPKR) has biased composition (basic residues).

This sequence belongs to the histone H2B family. The nucleosome is a histone octamer containing two molecules each of H2A, H2B, H3 and H4 assembled in one H3-H4 heterotetramer and two H2A-H2B heterodimers. The octamer wraps approximately 147 bp of DNA.

Its subcellular location is the nucleus. It is found in the chromosome. Core component of nucleosome. Nucleosomes wrap and compact DNA into chromatin, limiting DNA accessibility to the cellular machineries which require DNA as a template. Histones thereby play a central role in transcription regulation, DNA repair, DNA replication and chromosomal stability. DNA accessibility is regulated via a complex set of post-translational modifications of histones, also called histone code, and nucleosome remodeling. The sequence is that of Histone H2B from Trypanosoma cruzi.